A 196-amino-acid chain; its full sequence is MAFTEIANLISSKNFKAILDYCQRQEIESKNIDLIKSYYGVYLLSYLINNDLINAKHLWKRIPNDFKQSNQQLKNIYTIIKSISQTNPTITYTSLSINIGDDYTPFITTLKENFQQRTFELISNAYSSITVNDCSSYLGISPEDTIKFTTSKCWEHDKASNTLKPVPIQKQSSELPTGNQQIRSLTSYVLFLEKST.

Residues 10–177 (ISSKNFKAIL…IQKQSSELPT (168 aa)) form the PCI domain.

The protein belongs to the CSN8 family. In terms of assembly, component of the CSN complex. The holocomplex is comprised of 8 subunits csn1-8. In the complex, it probably interacts directly with csn5 and csn8.

It localises to the cytoplasm. The protein resides in the nucleus. Functionally, component of the COP9 signalosome complex (CSN), a complex involved in various cellular and developmental processes. The CSN complex is an essential regulator of the ubiquitin (Ubl) conjugation pathway by mediating the deneddylation of the cullin subunits of E3 ligase complexes, leading to modify the Ubl ligase activity. This is COP9 signalosome complex subunit 8 (csn8) from Dictyostelium discoideum (Social amoeba).